A 418-amino-acid chain; its full sequence is Serine/threonine transporter SstT (418 aa).

9 helical membrane-spanning segments follow: residues 16–36, 45–65, 83–103, 142–162, 192–212, 218–238, 289–309, 317–337, and 364–384; these read SLVS…TLIP, LGTL…LLLV, LLIL…VASF, ALLE…GLSL, PLGI…SALL, LIVL…LIVF, VSIP…ITVL, LGIS…TISA, and VAMQ…SAET.

This sequence belongs to the dicarboxylate/amino acid:cation symporter (DAACS) (TC 2.A.23) family.

It is found in the cell inner membrane. It carries out the reaction L-serine(in) + Na(+)(in) = L-serine(out) + Na(+)(out). The catalysed reaction is L-threonine(in) + Na(+)(in) = L-threonine(out) + Na(+)(out). Its function is as follows. Involved in the import of serine and threonine into the cell, with the concomitant import of sodium (symport system). This is Serine/threonine transporter SstT from Tolumonas auensis (strain DSM 9187 / NBRC 110442 / TA 4).